The primary structure comprises 883 residues: Pre-mRNA-splicing factor syf1 homolog (883 aa).

12 HAT repeats span residues 13-45 (INFEVEDVPYEEEILRNAYSVKHWLRYIDHKAK), 46-78 (APNNGVNMVYERALKELPGSYKIWHNYLRTRRK), 88-120 (PMYEEVNSAFERALVFMHKMPRIWMDYGAFMTS), 122-156 (CKITRTRHVFDRALRALPITQHGRIWPLYLQFVRR), 158-190 (EMPETALRVYRRYLKLFPEDTEEYVDYLQEADR), 268-303 (GLFDRARDIYEEAIQTVTTVRDFTQVFDEYAQFEEL), 368-406 (DKPAEIISTYTEAVQTVQPKQAVGKLHTLWVEFAKFYEA), 463-495 (KRKIAYYDDTETVQARLHRSLKVWSMYADLEES), 531-565 (NYFEEAYRAYEKGISLFKWPNVYDIWNSYLTKFLE), 570-604 (TKLERARDLFEQCLDQCPPEHAKYFYLLYAKLEEE), 642-676 (YGLPRTREIYEKAIESLPEQNMRHMCVKFAELETK), and 678-712 (GEVDRARAIYAHCSQVCDPRITADFWQTWKEFEVR). Disordered regions lie at residues 794–851 (RGET…DEEG) and 864–883 (IPAKVFGSLKPSNQGDSDGE). Residues 812 to 834 (DEIDIGDSDEDDEEEDDDEENEM) are compositionally biased toward acidic residues. 2 stretches are compositionally biased toward polar residues: residues 835–844 (TNENQASAAV) and 873–883 (KPSNQGDSDGE).

Belongs to the crooked-neck family. As to quaternary structure, component of the NTC(Nineteen)/Prp19 complex composed of at least fand, Prp19,CG9667/ISY1 and Cdc5/CDC5L. Within the complex, interacts with Prp19 and ISY1/CG9667.

It is found in the nucleus. In terms of biological role, subunit of the NTC(Nineteen)/Prp19 complex, which is part of the spliceosome. The complex participates in spliceosome assembly, its remodeling and is required for efficient spliceosome activation. Essential for efficient pre-mRNA splicing. In embryos, efficient pre-mRNA splicing of zygotic transcripts is essential during dynamic cellular processes that require rapid division and/or dramatic changes in gene expression such as blastoderm cellularization, tracheal branching morphogenesis, Malpighian morphogenesis and epidermal development. Part of its role in promoting embryo tracheal development is also due to specifically splicing bnl transcripts which results in the activation of the BNL-FGF pathway. The chain is Pre-mRNA-splicing factor syf1 homolog from Drosophila melanogaster (Fruit fly).